The primary structure comprises 149 residues: MADQLTEEQIAEFKEAFSLFDKDGDGTITTKELGTVMRSLGQNPTEAELQDMINEVDADGNGTIDFPEFLTMMARKMKDTDSEEEIREAFRVFDKDGNGFISAAELRHVMTNLGEKLTDEEVDEMIREADIDGDGQVNYEEFVTMMMSK.

Ala-2 bears the N-acetylalanine mark. EF-hand domains follow at residues 8–43 (EQIAEFKEAFSLFDKDGDGTITTKELGTVMRSLGQN), 44–79 (PTEAELQDMINEVDADGNGTIDFPEFLTMMARKMKD), 81–116 (DSEEEIREAFRVFDKDGNGFISAAELRHVMTNLGEK), and 117–149 (LTDEEVDEMIREADIDGDGQVNYEEFVTMMMSK). Ca(2+)-binding residues include Asp-21, Asp-23, Asp-25, Thr-27, Glu-32, Asp-57, Asp-59, Asn-61, Thr-63, Glu-68, Asp-94, Asp-96, Asn-98, and Glu-105. The residue at position 116 (Lys-116) is an N6,N6,N6-trimethyllysine. 5 residues coordinate Ca(2+): Asp-130, Asp-132, Asp-134, Gln-136, and Glu-141.

This sequence belongs to the calmodulin family.

Its function is as follows. Calmodulin mediates the control of a large number of enzymes, ion channels and other proteins by Ca(2+). Among the enzymes to be stimulated by the calmodulin-Ca(2+) complex are a number of protein kinases and phosphatases. This Lumbricus rubellus (Humus earthworm) protein is Calmodulin.